The primary structure comprises 603 residues: Probable methyltransferase PMT4 (603 aa).

Residues 1–12 lie on the Cytoplasmic side of the membrane; that stretch reads MKVASVIGLRPR. A helical; Signal-anchor for type II membrane protein membrane pass occupies residues 13-33; sequence ISGLLFLTLGVIALITILVPN. The Lumenal segment spans residues 34–603; it reads SDSSSTTSTT…LVCQKPLLKK (570 aa). 2 N-linked (GlcNAc...) asparagine glycosylation sites follow: Asn96 and Asn393.

This sequence belongs to the methyltransferase superfamily.

Its subcellular location is the endoplasmic reticulum membrane. This chain is Probable methyltransferase PMT4, found in Arabidopsis thaliana (Mouse-ear cress).